The primary structure comprises 280 residues: Ataxin-3 homolog (280 aa).

The Josephin domain maps to 7-187 (GGMLYHEVQE…QECPMSSSSE (181 aa)). Catalysis depends on C20, which acts as the Nucleophile. The active-site Proton acceptor is H126. D141 is a catalytic residue. Polar residues-rich tracts occupy residues 183–194 (SSSSEASNSFGQ) and 221–232 (DNVNQQRRNQAL). Residues 183–240 (SSSSEASNSFGQWLSPEDAERIRKNTSSGSSARNKRSNDNVNQQRRNQALSREEVQAF) form a disordered region. The region spanning 243–262 (MEDDDLKAAIAASLLDASAA) is the UIM domain.

It localises to the nucleus. The enzyme catalyses Thiol-dependent hydrolysis of ester, thioester, amide, peptide and isopeptide bonds formed by the C-terminal Gly of ubiquitin (a 76-residue protein attached to proteins as an intracellular targeting signal).. Its function is as follows. Interacts with key regulators of transcription and represses transcription. Acts as a histone-binding protein that regulates transcription. Acts as a deubiquitinating enzyme. In Arabidopsis thaliana (Mouse-ear cress), this protein is Ataxin-3 homolog.